A 255-amino-acid polypeptide reads, in one-letter code: Hemin import ATP-binding protein HmuV (255 aa).

The region spanning 2-238 is the ABC transporter domain; the sequence is LRVENLSIRR…EPLRAVFGLE (237 aa). An ATP-binding site is contributed by 34–41; sequence GPNGAGKS.

The protein belongs to the ABC transporter superfamily. Heme (hemin) importer (TC 3.A.1.14.5) family. In terms of assembly, the complex is composed of two ATP-binding proteins (HmuV), two transmembrane proteins (HmuU) and a solute-binding protein (HmuT).

It localises to the cell inner membrane. Part of the ABC transporter complex HmuTUV involved in hemin import. Responsible for energy coupling to the transport system. In Pseudomonas aeruginosa (strain ATCC 15692 / DSM 22644 / CIP 104116 / JCM 14847 / LMG 12228 / 1C / PRS 101 / PAO1), this protein is Hemin import ATP-binding protein HmuV.